Reading from the N-terminus, the 155-residue chain is MPHPLLPDITPVAASTAAAHGFELVEIQILTHLQPMTVQVQIRRTDGSDVSLDDCAGFSGPMGEALESQALLTEAYVLEISSPGIGEQLQSDRDFQTFRSYPVEVLYRDDEGREQRQQGSLLERNADHVQVNVRGRIKRIARASVISVQLISPTG.

It belongs to the RimP family.

Its subcellular location is the cytoplasm. Functionally, required for maturation of 30S ribosomal subunits. This Synechococcus sp. (strain WH7803) protein is Ribosome maturation factor RimP.